The chain runs to 104 residues: Putative Fis-like DNA-binding protein (104 aa).

The segment at residues 80–99 is a DNA-binding region (H-T-H motif); that stretch reads QTKASELLGLNRGTLRKKLK.

Belongs to the transcriptional regulatory Fis family.

The polypeptide is Putative Fis-like DNA-binding protein (Pseudomonas aeruginosa (strain ATCC 15692 / DSM 22644 / CIP 104116 / JCM 14847 / LMG 12228 / 1C / PRS 101 / PAO1)).